The chain runs to 134 residues: Agouti-related protein (134 aa).

The first 20 residues, 1–20, serve as a signal peptide directing secretion; that stretch reads MLTTMLLSCALLLAMPTMLG. The propeptide occupies 21–84; it reads AQIGLAPLEG…VLDPEGRKAR (64 aa). 5 disulfides stabilise this stretch: C89–C104, C96–C110, C103–C121, C107–C131, and C112–C119. Residues 89-131 enclose the Agouti domain; that stretch reads CVRLHESCLGHQVPCCDPCATCYCRFFNAFCYCRKLGTATNPC. Positions 113-115 are interaction with melanocortin receptors; the sequence is RFF.

In terms of assembly, interacts with melanocortin receptors MC3R, MC4R and MC5R.

It is found in the secreted. The protein resides in the golgi apparatus lumen. In terms of biological role, plays a role in weight homeostasis. Involved in the control of feeding behavior through the central melanocortin system. Acts as alpha melanocyte-stimulating hormone antagonist by inhibiting cAMP production mediated by stimulation of melanocortin receptors within the hypothalamus and adrenal gland. Has very low activity with MC5R. Is an inverse agonist for MC3R and MC4R being able to suppress their constitutive activity. It promotes MC3R and MC4R endocytosis in an arrestin-dependent manner. This is Agouti-related protein (AGRP) from Sus scrofa (Pig).